The primary structure comprises 225 residues: ATP-dependent dethiobiotin synthetase BioD 1 (225 aa).

13 to 18 (EVGKTV) is an ATP binding site. Threonine 17 lines the Mg(2+) pocket. Residue lysine 38 is part of the active site. A substrate-binding site is contributed by serine 42. ATP contacts are provided by residues aspartate 55, 116–119 (EGAG), 176–177 (ND), 205–207 (PWL), and glutamate 212. Aspartate 55 and glutamate 116 together coordinate Mg(2+).

The protein belongs to the dethiobiotin synthetase family. Homodimer. Mg(2+) is required as a cofactor.

It localises to the cytoplasm. It catalyses the reaction (7R,8S)-7,8-diammoniononanoate + CO2 + ATP = (4R,5S)-dethiobiotin + ADP + phosphate + 3 H(+). It functions in the pathway cofactor biosynthesis; biotin biosynthesis; biotin from 7,8-diaminononanoate: step 1/2. In terms of biological role, catalyzes a mechanistically unusual reaction, the ATP-dependent insertion of CO2 between the N7 and N8 nitrogen atoms of 7,8-diaminopelargonic acid (DAPA, also called 7,8-diammoniononanoate) to form a ureido ring. In Escherichia coli O157:H7, this protein is ATP-dependent dethiobiotin synthetase BioD 1.